A 312-amino-acid polypeptide reads, in one-letter code: Peptide methionine sulfoxide reductase MsrA/MsrB 1 (312 aa).

Residues 1–155 (MAEIYLAGGC…PSGYCHIDVT (155 aa)) are peptide methionine sulfoxide reductase. C10 is a catalytic residue. In terms of domain architecture, MsrB spans 172–295 (QEVLKASLSE…NSASLRFVAK (124 aa)). C284 acts as the Nucleophile in catalysis.

It in the N-terminal section; belongs to the MsrA Met sulfoxide reductase family. In the C-terminal section; belongs to the MsrB Met sulfoxide reductase family.

It localises to the cell membrane. It catalyses the reaction L-methionyl-[protein] + [thioredoxin]-disulfide + H2O = L-methionyl-(S)-S-oxide-[protein] + [thioredoxin]-dithiol. The enzyme catalyses [thioredoxin]-disulfide + L-methionine + H2O = L-methionine (S)-S-oxide + [thioredoxin]-dithiol. It carries out the reaction L-methionyl-[protein] + [thioredoxin]-disulfide + H2O = L-methionyl-(R)-S-oxide-[protein] + [thioredoxin]-dithiol. Has an important function as a repair enzyme for proteins that have been inactivated by oxidation. Catalyzes the reversible oxidation-reduction of methionine sulfoxide in proteins to methionine. In Streptococcus pneumoniae serotype 4 (strain ATCC BAA-334 / TIGR4), this protein is Peptide methionine sulfoxide reductase MsrA/MsrB 1 (msrAB1).